The sequence spans 184 residues: MKNVTDSFVSLGHWPSAGSFGFNTDILATNPINLSVVLGVLIFFGKGVLSDLLDNRKQRILNTIRNSEELRGGAIEQLEKARSRLRKVETEAEQFRVNGYSEIEREKLNLINSTYKTLEQLENYKNETIQFEQQRAINQVRQRVFQQALRGALGTLNSCLNNELHLRTISANIGMLGTMKEITD.

The chain crosses the membrane as a helical span at residues 27–49 (LATNPINLSVVLGVLIFFGKGVL).

Belongs to the ATPase B chain family. As to quaternary structure, F-type ATPases have 2 components, F(1) - the catalytic core - and F(0) - the membrane proton channel. F(1) has five subunits: alpha(3), beta(3), gamma(1), delta(1), epsilon(1). F(0) has four main subunits: a(1), b(1), b'(1) and c(10-14). The alpha and beta chains form an alternating ring which encloses part of the gamma chain. F(1) is attached to F(0) by a central stalk formed by the gamma and epsilon chains, while a peripheral stalk is formed by the delta, b and b' chains.

It is found in the plastid. The protein resides in the chloroplast thylakoid membrane. Its function is as follows. F(1)F(0) ATP synthase produces ATP from ADP in the presence of a proton or sodium gradient. F-type ATPases consist of two structural domains, F(1) containing the extramembraneous catalytic core and F(0) containing the membrane proton channel, linked together by a central stalk and a peripheral stalk. During catalysis, ATP synthesis in the catalytic domain of F(1) is coupled via a rotary mechanism of the central stalk subunits to proton translocation. Component of the F(0) channel, it forms part of the peripheral stalk, linking F(1) to F(0). The protein is ATP synthase subunit b, chloroplastic of Solanum bulbocastanum (Wild potato).